Reading from the N-terminus, the 473-residue chain is Rifampicin monooxygenase (473 aa).

Residues T12, E31, K32, and R41 each contribute to the FAD site. Residue R43 coordinates rifampicin. Q98, V122, and T156 together coordinate FAD. R196 is a binding site for rifampicin. D276 is an FAD binding site. Residue G285 participates in rifampicin binding. FAD contacts are provided by L289 and N290.

Belongs to the rifampicin monooxygenase family. In terms of assembly, homodimer. Requires FAD as cofactor.

It carries out the reaction rifampicin + NADPH + O2 = rifampicin para-naphthoquinone carboxamide + NADP(+) + H2O + H(+). The enzyme catalyses rifampicin + NADH + O2 = rifampicin para-naphthoquinone carboxamide + NAD(+) + H2O + H(+). Functionally, monooxygenase that can modify rifampicin, thereby inactivating its antibiotic activity. It constitutes a secondary rifampicin resistance factor. This is Rifampicin monooxygenase from Nocardia farcinica (strain IFM 10152).